The following is a 1062-amino-acid chain: Isoleucine--tRNA ligase (1062 aa).

The 'HIGH' region motif lies at 47-57; sequence PYTTGHIHLGT. The short motif at 591-595 is the 'KMSKS' region element; sequence KMSKS. An ATP-binding site is contributed by K594.

The protein belongs to the class-I aminoacyl-tRNA synthetase family. IleS type 2 subfamily. In terms of assembly, monomer. Zn(2+) is required as a cofactor.

The protein localises to the cytoplasm. It catalyses the reaction tRNA(Ile) + L-isoleucine + ATP = L-isoleucyl-tRNA(Ile) + AMP + diphosphate. In terms of biological role, catalyzes the attachment of isoleucine to tRNA(Ile). As IleRS can inadvertently accommodate and process structurally similar amino acids such as valine, to avoid such errors it has two additional distinct tRNA(Ile)-dependent editing activities. One activity is designated as 'pretransfer' editing and involves the hydrolysis of activated Val-AMP. The other activity is designated 'posttransfer' editing and involves deacylation of mischarged Val-tRNA(Ile). The protein is Isoleucine--tRNA ligase of Methanospirillum hungatei JF-1 (strain ATCC 27890 / DSM 864 / NBRC 100397 / JF-1).